Consider the following 320-residue polypeptide: Homoserine kinase (320 aa).

Position 100-110 (100-110) interacts with ATP; that stretch reads PLSSGMGSSAA.

It belongs to the GHMP kinase family. Homoserine kinase subfamily.

It localises to the cytoplasm. It catalyses the reaction L-homoserine + ATP = O-phospho-L-homoserine + ADP + H(+). It functions in the pathway amino-acid biosynthesis; L-threonine biosynthesis; L-threonine from L-aspartate: step 4/5. Functionally, catalyzes the ATP-dependent phosphorylation of L-homoserine to L-homoserine phosphate. This Chlorobium phaeovibrioides (strain DSM 265 / 1930) (Prosthecochloris vibrioformis (strain DSM 265)) protein is Homoserine kinase.